The following is a 531-amino-acid chain: CTP synthase (531 aa).

Residues 1–264 form an amidoligase domain region; sequence MPKFVVVTGG…GDFLVERLRL (264 aa). A CTP-binding site is contributed by Ser13. Ser13 contributes to the UTP binding site. ATP is bound at residue 14–19; sequence GLGKGV. Tyr54 contributes to the L-glutamine binding site. Asp71 is a binding site for ATP. Mg(2+)-binding residues include Asp71 and Glu139. CTP is bound by residues 146–148, 185–190, and Lys221; these read DYE and KTKPLQ. UTP is bound by residues 185–190 and Lys221; that span reads KTKPLQ. The Glutamine amidotransferase type-1 domain maps to 293–531; the sequence is CGKYVELPDA…LSAAVEQSRR (239 aa). Gly351 provides a ligand contact to L-glutamine. The active-site Nucleophile; for glutamine hydrolysis is the Cys378. L-glutamine is bound by residues 379–382, Glu402, and Arg459; that span reads FGMQ. Active-site residues include His504 and Glu506.

Belongs to the CTP synthase family. In terms of assembly, homotetramer.

It carries out the reaction UTP + L-glutamine + ATP + H2O = CTP + L-glutamate + ADP + phosphate + 2 H(+). It catalyses the reaction L-glutamine + H2O = L-glutamate + NH4(+). The catalysed reaction is UTP + NH4(+) + ATP = CTP + ADP + phosphate + 2 H(+). It functions in the pathway pyrimidine metabolism; CTP biosynthesis via de novo pathway; CTP from UDP: step 2/2. With respect to regulation, allosterically activated by GTP, when glutamine is the substrate; GTP has no effect on the reaction when ammonia is the substrate. The allosteric effector GTP functions by stabilizing the protein conformation that binds the tetrahedral intermediate(s) formed during glutamine hydrolysis. Inhibited by the product CTP, via allosteric rather than competitive inhibition. In terms of biological role, catalyzes the ATP-dependent amination of UTP to CTP with either L-glutamine or ammonia as the source of nitrogen. Regulates intracellular CTP levels through interactions with the four ribonucleotide triphosphates. The polypeptide is CTP synthase (Pyrobaculum calidifontis (strain DSM 21063 / JCM 11548 / VA1)).